The chain runs to 180 residues: ATP synthase subunit delta (180 aa).

This sequence belongs to the ATPase delta chain family. As to quaternary structure, F-type ATPases have 2 components, F(1) - the catalytic core - and F(0) - the membrane proton channel. F(1) has five subunits: alpha(3), beta(3), gamma(1), delta(1), epsilon(1). F(0) has three main subunits: a(1), b(2) and c(10-14). The alpha and beta chains form an alternating ring which encloses part of the gamma chain. F(1) is attached to F(0) by a central stalk formed by the gamma and epsilon chains, while a peripheral stalk is formed by the delta and b chains.

It localises to the cell inner membrane. In terms of biological role, f(1)F(0) ATP synthase produces ATP from ADP in the presence of a proton or sodium gradient. F-type ATPases consist of two structural domains, F(1) containing the extramembraneous catalytic core and F(0) containing the membrane proton channel, linked together by a central stalk and a peripheral stalk. During catalysis, ATP synthesis in the catalytic domain of F(1) is coupled via a rotary mechanism of the central stalk subunits to proton translocation. Its function is as follows. This protein is part of the stalk that links CF(0) to CF(1). It either transmits conformational changes from CF(0) to CF(1) or is implicated in proton conduction. This is ATP synthase subunit delta from Cupriavidus metallidurans (strain ATCC 43123 / DSM 2839 / NBRC 102507 / CH34) (Ralstonia metallidurans).